We begin with the raw amino-acid sequence, 509 residues long: Sperm-associated antigen 6 (509 aa).

ARM repeat units lie at residues 31–70 (PQNIETLQNAGVMSLLRTLLLDVVPTIQQTAALALGRLAN), 73–112 (DDLAEAVVKCDILPQLVYSLAEQNRFYKKAAAFVLRAVGK), 115–154 (PQLAQAIVDCGALDTLVICLEDFDPGVKEAAAWALRYIAR), 157–196 (AELSQAVVDAGAVPLLVLCIQEPEIALKRIAASALSDIAK), 199–238 (PELAQTVVDAGAVAHLAQMILNPDAKLKHQILSALSQVSK), 241–280 (VDLAEMVVEAEIFPVVLTCLKDKDEYVKKNASTLIREIAK), 325–365 (ENLA…QIGR), and 368–409 (PEHA…NILQ).

Interacts with SPAG16 and SPAG17. As to expression, highly expressed in testis.

The protein localises to the cytoplasm. It localises to the cytoskeleton. Its subcellular location is the cell projection. The protein resides in the cilium. It is found in the flagellum. The protein localises to the cilium axoneme. Functionally, important for structural integrity of the central apparatus in the sperm tail and for flagellar motility. This chain is Sperm-associated antigen 6 (SPAG6), found in Homo sapiens (Human).